The following is a 239-amino-acid chain: Protein UL24 homolog (239 aa).

The segment at 212–239 (TPKLGNSKTSKRKRRNSKKQDFKKLVKN) is disordered. Over residues 229 to 239 (KKQDFKKLVKN) the composition is skewed to basic and acidic residues.

The protein belongs to the herpesviridae UL24 family.

The protein localises to the virion. It localises to the host cytoplasm. Its subcellular location is the host nucleus. It is found in the host nucleolus. The protein resides in the host Golgi apparatus. May participate in nuclear egress of viral particles. Plays a role in the dispersal of several host nucleolar proteins including NCL/nucleolin and NPM1. Since deletion of host NCL/nucleolin negatively impact on nuclear egress, UL24 supposedly acts on this process through its effect on host nucleoli. This is Protein UL24 homolog (U49) from Homo sapiens (Human).